A 73-amino-acid chain; its full sequence is Beta-defensin 10 (73 aa).

Positions 1–23 are cleaved as a signal peptide; it reads MRTLCSLLLICCLLFSYTTPAVG. 3 cysteine pairs are disulfide-bonded: cysteine 37–cysteine 66, cysteine 44–cysteine 59, and cysteine 49–cysteine 67.

It belongs to the beta-defensin family. Expressed in both adult and neonate brain, and very weakly in kidneys, epididymis, and testis.

Its subcellular location is the secreted. In terms of biological role, has antibacterial activity. The protein is Beta-defensin 10 (Defb10) of Mus musculus (Mouse).